A 459-amino-acid polypeptide reads, in one-letter code: Argininosuccinate lyase (459 aa).

Belongs to the lyase 1 family. Argininosuccinate lyase subfamily.

The protein localises to the cytoplasm. It carries out the reaction 2-(N(omega)-L-arginino)succinate = fumarate + L-arginine. The protein operates within amino-acid biosynthesis; L-arginine biosynthesis; L-arginine from L-ornithine and carbamoyl phosphate: step 3/3. This Sulfurihydrogenibium sp. (strain YO3AOP1) protein is Argininosuccinate lyase.